Consider the following 79-residue polypeptide: UPF0180 protein BCE_1513 (79 aa).

It belongs to the UPF0180 family.

The protein is UPF0180 protein BCE_1513 of Bacillus cereus (strain ATCC 10987 / NRS 248).